A 143-amino-acid polypeptide reads, in one-letter code: Large ribosomal subunit protein uL11 (143 aa).

The protein belongs to the universal ribosomal protein uL11 family. In terms of assembly, part of the ribosomal stalk of the 50S ribosomal subunit. Interacts with L10 and the large rRNA to form the base of the stalk. L10 forms an elongated spine to which L12 dimers bind in a sequential fashion forming a multimeric L10(L12)X complex. One or more lysine residues are methylated.

Its function is as follows. Forms part of the ribosomal stalk which helps the ribosome interact with GTP-bound translation factors. The chain is Large ribosomal subunit protein uL11 from Borreliella burgdorferi (strain ATCC 35210 / DSM 4680 / CIP 102532 / B31) (Borrelia burgdorferi).